The chain runs to 466 residues: Asparagine--tRNA ligase (466 aa).

Belongs to the class-II aminoacyl-tRNA synthetase family. As to quaternary structure, homodimer.

The protein localises to the cytoplasm. The catalysed reaction is tRNA(Asn) + L-asparagine + ATP = L-asparaginyl-tRNA(Asn) + AMP + diphosphate + H(+). This Buchnera aphidicola subsp. Schizaphis graminum (strain Sg) protein is Asparagine--tRNA ligase.